The primary structure comprises 155 residues: Altered inheritance rate of mitochondria protein 29 (155 aa).

Ser-78 is modified (phosphoserine).

This sequence belongs to the UPF0538 family.

It is found in the cytoplasm. May be involved in mitochondrial organization and biogenesis. The polypeptide is Altered inheritance rate of mitochondria protein 29 (AIM29) (Saccharomyces cerevisiae (strain ATCC 204508 / S288c) (Baker's yeast)).